The sequence spans 590 residues: Protein OS-9 homolog (590 aa).

The signal sequence occupies residues 1 to 19 (MRRPSLALLALSSLPFGSA). Positions 83–106 (SAIRESATANADTDNGDESIGGTS) are disordered. N-linked (GlcNAc...) asparagine glycosylation is present at Asn-136. The region spanning 167–312 (NQCLHFVSGW…VIHTPRLCAD (146 aa)) is the MRH domain. Cys-169 and Cys-182 form a disulfide bridge. A mannooligosaccharide derivative-binding residues include Trp-176, Trp-177, and Gln-189. A disordered region spans residues 198–248 (GGPPLRDKNSQEYILGTSLPPSSHSQKGKQIEVPNNEQKQLSPPPNTELQA). 2 disulfide bridges follow: Cys-265/Cys-298 and Cys-280/Cys-310. Residues Asp-266, Arg-272, Glu-294, and Tyr-300 each coordinate a mannooligosaccharide derivative. 3 disordered regions span residues 357–376 (AAVT…PEKL), 436–472 (GDDN…MKKM), and 545–590 (YEDE…RDEL). Residues 446–455 (HHPKAGKGRK) show a composition bias toward basic residues. Basic and acidic residues-rich tracts occupy residues 556–568 (EAGK…KKGG) and 579–590 (EGSKEEYYRDEL). The short motif at 587–590 (RDEL) is the Prevents secretion from ER element.

It belongs to the OS-9 family. As to quaternary structure, interacts with missfolded ER lumenal proteins.

The protein localises to the endoplasmic reticulum membrane. Lectin involved in the quality control of the secretory pathway. As a member of the endoplasmic reticulum-associated degradation lumenal (ERAD-L) surveillance system, targets misfolded endoplasmic reticulum lumenal glycoproteins for degradation. This Neurospora crassa (strain ATCC 24698 / 74-OR23-1A / CBS 708.71 / DSM 1257 / FGSC 987) protein is Protein OS-9 homolog (yos-9).